Consider the following 229-residue polypeptide: Enolase-phosphatase E1 (229 aa).

The protein belongs to the HAD-like hydrolase superfamily. MasA/MtnC family. In terms of assembly, monomer. Mg(2+) is required as a cofactor.

It catalyses the reaction 5-methylsulfanyl-2,3-dioxopentyl phosphate + H2O = 1,2-dihydroxy-5-(methylsulfanyl)pent-1-en-3-one + phosphate. It participates in amino-acid biosynthesis; L-methionine biosynthesis via salvage pathway; L-methionine from S-methyl-5-thio-alpha-D-ribose 1-phosphate: step 3/6. Its pathway is amino-acid biosynthesis; L-methionine biosynthesis via salvage pathway; L-methionine from S-methyl-5-thio-alpha-D-ribose 1-phosphate: step 4/6. Bifunctional enzyme that catalyzes the enolization of 2,3-diketo-5-methylthiopentyl-1-phosphate (DK-MTP-1-P) into the intermediate 2-hydroxy-3-keto-5-methylthiopentenyl-1-phosphate (HK-MTPenyl-1-P), which is then dephosphorylated to form the acireductone 1,2-dihydroxy-3-keto-5-methylthiopentene (DHK-MTPene). This is Enolase-phosphatase E1 from Enterobacter sp. (strain 638).